A 468-amino-acid chain; its full sequence is MLAVGCALLAALLAAPGAALAPRRCPAQEVARGVLTSLPGDSVTLTCPGVEPEDNATVHWVLRKPAAGSHPSRWAGMGRRLLLRSVQLHDSGNYSCYRAGRPAGTVHLLVDVPPEEPQLSCFRKSPLSNVVCEWGPRSTPSLTTKAVLLVRKFQNSPAEDFQEPCQYSQESQKFSCQLAVPEGDSSFYIVSMCVASSVGSKFSKTQTFQGCGILQPDPPANITVTAVARNPRWLSVTWQDPHSWNSSFYRLRFELRYRAERSKTFTTWMVKDLQHHCVIHDAWSGLRHVVQLRAQEEFGQGEWSEWSPEAMGTPWTESRSPPAENEVSTPMQALTTNKDDDNILFRDSANATSLPVQDSSSVPLPTFLVAGGSLAFGTLLCIAIVLRFKKTWKLRALKEGKTSMHPPYSLGQLVPERPRPTPVLVPLISPPVSPSSLGSDNTSSHNRPDARDPRSPYDISNTDYFFPR.

An N-terminal signal peptide occupies residues 1-19 (MLAVGCALLAALLAAPGAA). Residues 20–365 (LAPRRCPAQE…VQDSSSVPLP (346 aa)) lie on the Extracellular side of the membrane. 4 cysteine pairs are disulfide-bonded: C25–C193, C47–C96, C121–C132, and C165–C176. Positions 26 to 112 (PAQEVARGVL…AGTVHLLVDV (87 aa)) constitute an Ig-like C2-type domain. 2 N-linked (GlcNAc...) asparagine glycosylation sites follow: N55 and N93. 2 consecutive Fibronectin type-III domains span residues 113–217 (PPEE…LQPD) and 218–316 (PPAN…TPWT). N-linked (GlcNAc...) asparagine glycosylation is found at N221 and N245. Residues 303–307 (WSEWS) carry the WSXWS motif motif. Residues 303–328 (WSEWSPEAMGTPWTESRSPPAENEVS) form a disordered region. Residue N350 is glycosylated (N-linked (GlcNAc...) asparagine). T352 carries O-linked (GlcNAc) threonine glycosylation. A helical membrane pass occupies residues 366–386 (TFLVAGGSLAFGTLLCIAIVL). The Cytoplasmic portion of the chain corresponds to 387 to 468 (RFKKTWKLRA…ISNTDYFFPR (82 aa)). Pro residues predominate over residues 421-433 (TPVLVPLISPPVS). Residues 421–468 (TPVLVPLISPPVSPSSLGSDNTSSHNRPDARDPRSPYDISNTDYFFPR) are disordered. Positions 446–455 (NRPDARDPRS) are enriched in basic and acidic residues. A compositionally biased stretch (polar residues) spans 458–468 (DISNTDYFFPR).

This sequence belongs to the type I cytokine receptor family. Type 3 subfamily. As to quaternary structure, component of a hexamer of two molecules each of IL6, IL6R and IL6ST; first binds to IL6 to associate with the signaling subunit IL6ST. Interacts (via N-terminal ectodomain) with SORL1; this interaction may affect IL6-binding to IL6R, hence decrease IL6 'classic-signaling'. Also interacts with SORL1; this interaction leads to soluble IL6R internalization. May form a trimeric complex with the soluble SORL1 ectodomain and circulating IL6 receptor; this interaction might stabilize circulating IL6, hence promote IL6 'trans-signaling,. A short soluble form is released from the membrane by proteolysis. The sIL6R is formed mostly by limited proteolysis of membrane-bound receptors, a process referred to as ectodomain shedding, but is also directly secreted from the cells after alternative mRNA splicing. mIL6R is cleaved by the proteases ADAM10 and ADAM17. Post-translationally, glycosylated. Glycosylation is dispensable for transport, signaling, and cell-surface turnover. Glycosylation at Asn-55 is a protease-regulatory exosite. Glycosylation is required for ADAM17-mediated proteolysis. In terms of tissue distribution, expressed in peripheral blood mononuclear cells and weakly found in urine and serum. 1%-20% of the total sIL6R in plasma is generated by alternative splicing.

It localises to the cell membrane. Its subcellular location is the secreted. With respect to regulation, classic and trans-signaling are both inhibited by tocilizumab, a humanized monoclonal antibody that blocks interleukin IL6R signaling. Functionally, part of the receptor for interleukin 6. Binds to IL6 with low affinity, but does not transduce a signal. Signal activation necessitate an association with IL6ST. Activation leads to the regulation of the immune response, acute-phase reactions and hematopoiesis. The interaction with membrane-bound IL6R and IL6ST stimulates 'classic signaling', the restricted expression of the IL6R limits classic IL6 signaling to only a few tissues such as the liver and some cells of the immune system. Whereas the binding of IL6 and soluble IL6R to IL6ST stimulates 'trans-signaling'. Alternatively, 'cluster signaling' occurs when membrane-bound IL6:IL6R complexes on transmitter cells activate IL6ST receptors on neighboring receiver cells. In terms of biological role, signaling via the membrane-bound IL6R is mostly regenerative and anti-inflammatory. Drives naive CD4(+) T cells to the Th17 lineage, through 'cluster signaling' by dendritic cells. Its function is as follows. Soluble form of IL6 receptor (sIL6R) that acts as an agonist of IL6 activity. The IL6:sIL6R complex (hyper-IL6) binds to IL6ST/gp130 on cell surfaces and induces signaling also on cells that do not express membrane-bound IL6R in a process called IL6 'trans-signaling'. sIL6R is causative for the pro-inflammatory properties of IL6 and an important player in the development of chronic inflammatory diseases. In complex with IL6, is required for induction of VEGF production. Plays a protective role during liver injury, being required for maintenance of tissue regeneration. 'Trans-signaling' in central nervous system regulates energy and glucose homeostasis. The sequence is that of Interleukin-6 receptor subunit alpha from Homo sapiens (Human).